The sequence spans 138 residues: Cysteine desulfuration protein SufE (138 aa).

Residue Cys-51 is the Cysteine persulfide intermediate of the active site.

It belongs to the SufE family. In terms of assembly, homodimer. Interacts with SufS.

The protein localises to the cytoplasm. Its pathway is cofactor biosynthesis; iron-sulfur cluster biosynthesis. Functionally, participates in cysteine desulfuration mediated by SufS. Cysteine desulfuration mobilizes sulfur from L-cysteine to yield L-alanine and constitutes an essential step in sulfur metabolism for biosynthesis of a variety of sulfur-containing biomolecules. Functions as a sulfur acceptor for SufS, by mediating the direct transfer of the sulfur atom from the S-sulfanylcysteine of SufS, an intermediate product of cysteine desulfuration process. In Shigella flexneri serotype 5b (strain 8401), this protein is Cysteine desulfuration protein SufE.